The primary structure comprises 213 residues: Thiopurine S-methyltransferase (213 aa).

Positions 10, 46, 67, and 124 each coordinate S-adenosyl-L-methionine.

It belongs to the class I-like SAM-binding methyltransferase superfamily. TPMT family.

Its subcellular location is the cytoplasm. It catalyses the reaction S-adenosyl-L-methionine + a thiopurine = S-adenosyl-L-homocysteine + a thiopurine S-methylether.. The protein is Thiopurine S-methyltransferase of Xanthobacter autotrophicus (strain ATCC BAA-1158 / Py2).